Reading from the N-terminus, the 557-residue chain is DNA mismatch repair protein MutL (557 aa).

The protein belongs to the DNA mismatch repair MutL/HexB family.

This protein is involved in the repair of mismatches in DNA. It is required for dam-dependent methyl-directed DNA mismatch repair. May act as a 'molecular matchmaker', a protein that promotes the formation of a stable complex between two or more DNA-binding proteins in an ATP-dependent manner without itself being part of a final effector complex. This is DNA mismatch repair protein MutL from Methanothrix thermoacetophila (strain DSM 6194 / JCM 14653 / NBRC 101360 / PT) (Methanosaeta thermophila).